The following is a 218-amino-acid chain: Ras-related protein R-Ras (218 aa).

The tract at residues 1-30 (MSSGAASGTGRGRPRGGGPGPRDPPPGETH) is disordered. Over residues 7-20 (SGTGRGRPRGGGPG) the composition is skewed to gly residues. 36 to 44 (GGGGVGKSA) serves as a coordination point for GTP. Residues 58 to 66 (YDPTIEDSY) carry the Effector region motif. Residues 83 to 87 (DTAGQ), 142 to 145 (NKAD), and 172 to 174 (SAK) contribute to the GTP site. Residue C215 is modified to Cysteine methyl ester. C215 is lipidated: S-geranylgeranyl cysteine. The propeptide at 216–218 (VLL) is removed in mature form.

Belongs to the small GTPase superfamily. Ras family. Interacts with PLCE1. Interacts (active GTP-bound form preferentially) with RGS14. Interacts with OSBPL3. Interacts with ZDHHC19. Post-translationally, S-palmitoylated by ZDHHC19, leading to increased association with membranes and with rafts/caveolae as well as enhanced cell viability.

It localises to the cell membrane. It catalyses the reaction GTP + H2O = GDP + phosphate + H(+). GTP-binding protein with GTPase activity, likely involved in the regulation of MAPK signaling pathway and thereby controlling multiple cellular processes. Regulates the organization of the actin cytoskeleton. With OSPBL3, modulates integrin beta-1 (ITGB1) activity. The polypeptide is Ras-related protein R-Ras (Rras) (Mus musculus (Mouse)).